We begin with the raw amino-acid sequence, 148 residues long: UPF0179 protein UNCMA_27840 (148 aa).

It belongs to the UPF0179 family.

In Methanocella arvoryzae (strain DSM 22066 / NBRC 105507 / MRE50), this protein is UPF0179 protein UNCMA_27840.